Consider the following 119-residue polypeptide: Ribonuclease P protein component (119 aa).

The protein belongs to the RnpA family. In terms of assembly, consists of a catalytic RNA component (M1 or rnpB) and a protein subunit.

It carries out the reaction Endonucleolytic cleavage of RNA, removing 5'-extranucleotides from tRNA precursor.. In terms of biological role, RNaseP catalyzes the removal of the 5'-leader sequence from pre-tRNA to produce the mature 5'-terminus. It can also cleave other RNA substrates such as 4.5S RNA. The protein component plays an auxiliary but essential role in vivo by binding to the 5'-leader sequence and broadening the substrate specificity of the ribozyme. This chain is Ribonuclease P protein component, found in Bifidobacterium longum (strain DJO10A).